We begin with the raw amino-acid sequence, 479 residues long: Glutamate--tRNA ligase 2 (479 aa).

Positions 18 to 28 match the 'HIGH' region motif; it reads PSPTGFLHIGG. Positions 244-248 match the 'KMSKS' region motif; that stretch reads KLSKR. Lys-247 lines the ATP pocket.

The protein belongs to the class-I aminoacyl-tRNA synthetase family. Glutamate--tRNA ligase type 1 subfamily. In terms of assembly, monomer.

Its subcellular location is the cytoplasm. The catalysed reaction is tRNA(Glu) + L-glutamate + ATP = L-glutamyl-tRNA(Glu) + AMP + diphosphate. In terms of biological role, catalyzes the attachment of glutamate to tRNA(Glu) in a two-step reaction: glutamate is first activated by ATP to form Glu-AMP and then transferred to the acceptor end of tRNA(Glu). The polypeptide is Glutamate--tRNA ligase 2 (Maricaulis maris (strain MCS10) (Caulobacter maris)).